The primary structure comprises 128 residues: Fluoride-specific ion channel FluC (128 aa).

Transmembrane regions (helical) follow at residues 4–24, 39–59, 71–91, and 99–119; these read LLLALIVGLGGFLGASLRYLI, GTLIANILGALLIGFIMEFSM, FLTTGIMGGLTTFSTFSYETI, and ITLGIENIILNLGCSLLFVVI. Na(+) is bound by residues glycine 78 and threonine 81.

This sequence belongs to the fluoride channel Fluc/FEX (TC 1.A.43) family.

The protein localises to the cell membrane. The catalysed reaction is fluoride(in) = fluoride(out). Its activity is regulated as follows. Na(+) is not transported, but it plays an essential structural role and its presence is essential for fluoride channel function. Functionally, fluoride-specific ion channel. Important for reducing fluoride concentration in the cell, thus reducing its toxicity. The chain is Fluoride-specific ion channel FluC from Clostridium perfringens (strain ATCC 13124 / DSM 756 / JCM 1290 / NCIMB 6125 / NCTC 8237 / Type A).